We begin with the raw amino-acid sequence, 154 residues long: RxLR effector protein PexRD24 (154 aa).

The first 22 residues, 1–22 (MHSSLLWLGAVVALLAVNNVTA), serve as a signal peptide directing secretion. Positions 53-67 (RSLRAVETSEDEEER) match the RxLR-dEER motif. Residue Lys-138 is a short sequence motif, PP1c-binding motif.

This sequence belongs to the RxLR effector family. Interacts with the potato PP1c family proteins PP1c-1, PP1c-2 and PP1c-3.

It localises to the secreted. The protein resides in the host nucleus. It is found in the host nucleoplasm. Its subcellular location is the host nucleolus. Its function is as follows. Effector that interacts with isoforms of host protein phosphatase type 1c (PP1c), mimicking a regulatory subunit and causing their re-localization within the host nucleus. The holoenzymes formed with PP1c isoforms act to promote late blight by attenuating jasmonic acid (JA)- and salicylic acid (SA)-mediated transcriptional responses of the host plant. The protein is RxLR effector protein PexRD24 of Phytophthora infestans (strain T30-4) (Potato late blight agent).